A 481-amino-acid chain; its full sequence is Thiol protease (481 aa).

The Calpain catalytic domain occupies 169–481 (DLREQALSST…ENFWYIAYMY (313 aa)). Catalysis depends on residues Cys-229, His-406, and Asn-426.

The protein belongs to the peptidase C2 family.

Inactive below 20 degrees Celsius and pH 6.0. Inhibited by divalent cations. Functionally, thiol protease. Probably an important virulence factor. The sequence is that of Thiol protease (tpr) from Porphyromonas gingivalis (strain ATCC BAA-308 / W83).